A 126-amino-acid polypeptide reads, in one-letter code: MQLSLLKAKIHRATVSHSELNYEGSIAIDGLLLEAAGLYEFEKVHIWNVTNGARFTTYAIRAEHGSGIISVNGGAARYVQVGDLVIVAAFAQMSEDEAAVFRPNLVYVDAANAMTHTNHSIPTQVA.

Ser25 functions as the Schiff-base intermediate with substrate; via pyruvic acid in the catalytic mechanism. Ser25 bears the Pyruvic acid (Ser) mark. Thr57 is a binding site for substrate. Tyr58 acts as the Proton donor in catalysis. Residue 73 to 75 participates in substrate binding; it reads GGA.

It belongs to the PanD family. As to quaternary structure, heterooctamer of four alpha and four beta subunits. The cofactor is pyruvate. Post-translationally, is synthesized initially as an inactive proenzyme, which is activated by self-cleavage at a specific serine bond to produce a beta-subunit with a hydroxyl group at its C-terminus and an alpha-subunit with a pyruvoyl group at its N-terminus.

The protein resides in the cytoplasm. It catalyses the reaction L-aspartate + H(+) = beta-alanine + CO2. It participates in cofactor biosynthesis; (R)-pantothenate biosynthesis; beta-alanine from L-aspartate: step 1/1. Its function is as follows. Catalyzes the pyruvoyl-dependent decarboxylation of aspartate to produce beta-alanine. This is Aspartate 1-decarboxylase from Xylella fastidiosa (strain M12).